We begin with the raw amino-acid sequence, 579 residues long: O-fucosyltransferase 24 (579 aa).

A helical; Signal-anchor for type II membrane protein membrane pass occupies residues 58–78; it reads LWAFSLFLLSILGISLRLGLC. The N-linked (GlcNAc...) asparagine glycan is linked to Asn-133. Residue 355-357 participates in substrate binding; it reads HLR. Residues Asn-528, Asn-573, and Asn-576 are each glycosylated (N-linked (GlcNAc...) asparagine).

The protein belongs to the glycosyltransferase GT106 family.

Its subcellular location is the membrane. It functions in the pathway glycan metabolism. In Arabidopsis thaliana (Mouse-ear cress), this protein is O-fucosyltransferase 24.